Consider the following 153-residue polypeptide: UPF0260 protein YcgN (153 aa).

It belongs to the UPF0260 family.

This chain is UPF0260 protein YcgN, found in Shigella boydii serotype 18 (strain CDC 3083-94 / BS512).